The primary structure comprises 354 residues: Src kinase-associated phosphoprotein 1 (354 aa).

The PH domain occupies 107 to 210; the sequence is NVIKQGYLEK…WVDQISFLLK (104 aa). Tyrosine 142 and tyrosine 236 each carry phosphotyrosine. 2 positions are modified to phosphotyrosine; by FYN: tyrosine 267 and tyrosine 290. An interaction with FYB1 region spans residues 285–290; it reads RRRVDY. An SH3 domain is found at 289 to 350; the sequence is DYADYYQGLW…PKDYLTTAFE (62 aa).

It belongs to the SKAP family. In terms of assembly, homodimer. Interacts with FYN. Interacts with PTPRC. Interacts with GRB2 when phosphorylated on Tyr-267. Interacts with FYB1, which is required for SKAP2 protein stability. Part of a complex consisting of SKAP1, FYB1 and CLNK. Interacts with RASGRP1. Interacts with FYB2. Phosphorylated on tyrosines. Phosphorylation by FYN on Tyr-267 is required for GRB2 interaction. Phosphorylation by FYN on Tyr-290 abolishes interaction with FYB1. Tyr-236 is dephosphorylated by PTPRC. As to expression, expressed in mast cells (at protein level).

The protein resides in the cytoplasm. Its subcellular location is the nucleus. It is found in the cell membrane. In terms of biological role, positively regulates T-cell receptor signaling by enhancing the MAP kinase pathway. Required for optimal conjugation between T-cells and antigen-presenting cells by promoting the clustering of integrin ITGAL on the surface of T-cells. May be involved in high affinity immunoglobulin epsilon receptor signaling in mast cells. The protein is Src kinase-associated phosphoprotein 1 (Skap1) of Rattus norvegicus (Rat).